The sequence spans 475 residues: MSSNSGDVRLWGGRFADGPAEALAKLSASVHFDWRLAPYDIAGSRAHARVLHAAGLLTEDELTRMIAGLDRLEADVADGSFTGTIADEDVHTALERGLLERLGPDLGGKLRAGRSRNDQVATLFRMYLRDHARTVGSLIADLQDALVGLAEAHPDVAMPGRTHLQHAQPVLFAHHVLAHAQALGRDAERLRQWDARTAVSPYGSGALAGSSLGLDPEAVARDLGFEHGSVGNSIDGTASRDFVAEFAFITAMIGVNVSRIAEEIIIWNTKEFSFVTLHDAFSTGSSIMPQKKNPDIAELARGKSGRLIGNLTGLMATLKALPLAYNRDLQEDKEPVFDSIDQLEVLLPAFTGMMATLTVHRERMEELAPAGFSLATDIAEWLVKQGVPFRVAHEVAGECVKVAEADGKELDELTDEQFAKISEHLTPEVRTVLNVPGALASRDGRGGTAPSAVAVQLAEVKADVAAQHAWADAKK.

It belongs to the lyase 1 family. Argininosuccinate lyase subfamily.

It is found in the cytoplasm. The enzyme catalyses 2-(N(omega)-L-arginino)succinate = fumarate + L-arginine. It functions in the pathway amino-acid biosynthesis; L-arginine biosynthesis; L-arginine from L-ornithine and carbamoyl phosphate: step 3/3. This is Argininosuccinate lyase from Streptomyces coelicolor (strain ATCC BAA-471 / A3(2) / M145).